The chain runs to 203 residues: Flagellar transcriptional regulator FlhC (203 aa).

Zn(2+)-binding residues include C161, C164, C181, and C184.

This sequence belongs to the FlhC family. In terms of assembly, heterohexamer composed of two FlhC and four FlhD subunits. Each FlhC binds a FlhD dimer, forming a heterotrimer, and a hexamer assembles by dimerization of two heterotrimers. Zn(2+) serves as cofactor.

It is found in the cytoplasm. Its function is as follows. Functions in complex with FlhD as a master transcriptional regulator that regulates transcription of several flagellar and non-flagellar operons by binding to their promoter region. Activates expression of class 2 flagellar genes, including fliA, which is a flagellum-specific sigma factor that turns on the class 3 genes. Also regulates genes whose products function in a variety of physiological pathways. In Cupriavidus necator (strain ATCC 17699 / DSM 428 / KCTC 22496 / NCIMB 10442 / H16 / Stanier 337) (Ralstonia eutropha), this protein is Flagellar transcriptional regulator FlhC.